The primary structure comprises 321 residues: uncharacterized protein (321 aa).

One can recognise an HTH lysR-type domain in the interval 1–58 (MTPAQLRAYSAVVRLGSVRAAAAELGLSDAGVSMHVAALRKELDDPLFTRTGAGLAFT). Residues 18–37 (VRAAAAELGLSDAGVSMHVA) constitute a DNA-binding region (H-T-H motif).

The protein belongs to the LysR transcriptional regulatory family.

This is an uncharacterized protein from Mycobacterium tuberculosis (strain CDC 1551 / Oshkosh).